The chain runs to 371 residues: Anhydro-N-acetylmuramic acid kinase (371 aa).

12 to 19 (GTSADGID) provides a ligand contact to ATP.

This sequence belongs to the anhydro-N-acetylmuramic acid kinase family.

It catalyses the reaction 1,6-anhydro-N-acetyl-beta-muramate + ATP + H2O = N-acetyl-D-muramate 6-phosphate + ADP + H(+). It functions in the pathway amino-sugar metabolism; 1,6-anhydro-N-acetylmuramate degradation. The protein operates within cell wall biogenesis; peptidoglycan recycling. Catalyzes the specific phosphorylation of 1,6-anhydro-N-acetylmuramic acid (anhMurNAc) with the simultaneous cleavage of the 1,6-anhydro ring, generating MurNAc-6-P. Is required for the utilization of anhMurNAc either imported from the medium or derived from its own cell wall murein, and thus plays a role in cell wall recycling. The protein is Anhydro-N-acetylmuramic acid kinase of Saccharophagus degradans (strain 2-40 / ATCC 43961 / DSM 17024).